The following is a 177-amino-acid chain: Large ribosomal subunit protein uL6 (177 aa).

Belongs to the universal ribosomal protein uL6 family. Part of the 50S ribosomal subunit.

Its function is as follows. This protein binds to the 23S rRNA, and is important in its secondary structure. It is located near the subunit interface in the base of the L7/L12 stalk, and near the tRNA binding site of the peptidyltransferase center. The protein is Large ribosomal subunit protein uL6 of Proteus mirabilis (strain HI4320).